A 434-amino-acid chain; its full sequence is Trigger factor (434 aa).

The region spanning 163–248 (GDRVTIDFEG…LTKIEAQHLP (86 aa)) is the PPIase FKBP-type domain.

The protein belongs to the FKBP-type PPIase family. Tig subfamily.

The protein resides in the cytoplasm. The catalysed reaction is [protein]-peptidylproline (omega=180) = [protein]-peptidylproline (omega=0). Its function is as follows. Involved in protein export. Acts as a chaperone by maintaining the newly synthesized protein in an open conformation. Functions as a peptidyl-prolyl cis-trans isomerase. The sequence is that of Trigger factor from Methylibium petroleiphilum (strain ATCC BAA-1232 / LMG 22953 / PM1).